The sequence spans 299 residues: Protease HtpX homolog (299 aa).

The next 2 membrane-spanning stretches (helical) occupy residues valine 16–phenylalanine 36 and serine 38–isoleucine 58. Histidine 144 contacts Zn(2+). Glutamate 145 is an active-site residue. Histidine 148 serves as a coordination point for Zn(2+). Helical transmembrane passes span isoleucine 159–tryptophan 179 and valine 198–valine 218. Glutamate 227 lines the Zn(2+) pocket.

The protein belongs to the peptidase M48B family. The cofactor is Zn(2+).

The protein resides in the cell membrane. The sequence is that of Protease HtpX homolog from Lactiplantibacillus plantarum (strain ATCC BAA-793 / NCIMB 8826 / WCFS1) (Lactobacillus plantarum).